Consider the following 361-residue polypeptide: Protein RecA (361 aa).

Glycine 77–threonine 84 is an ATP binding site.

It belongs to the RecA family.

The protein localises to the cytoplasm. Can catalyze the hydrolysis of ATP in the presence of single-stranded DNA, the ATP-dependent uptake of single-stranded DNA by duplex DNA, and the ATP-dependent hybridization of homologous single-stranded DNAs. It interacts with LexA causing its activation and leading to its autocatalytic cleavage. This is Protein RecA from Rhizobium rhizogenes (strain K84 / ATCC BAA-868) (Agrobacterium radiobacter).